The chain runs to 307 residues: Adenosylcobinamide-GDP ribazoletransferase (307 aa).

Helical transmembrane passes span 22–42 (PLFE…VPGA), 58–78 (PFVG…IGPI), 80–100 (GVIH…WELL), 137–157 (FGLA…ASLV), 161–181 (VWWM…VTAL), 212–232 (TAAL…LTSV), 248–268 (AWLG…AALF), and 283–303 (CIGA…AVVA).

Belongs to the CobS family. The cofactor is Mg(2+).

It is found in the cell membrane. The catalysed reaction is alpha-ribazole + adenosylcob(III)inamide-GDP = adenosylcob(III)alamin + GMP + H(+). It catalyses the reaction alpha-ribazole 5'-phosphate + adenosylcob(III)inamide-GDP = adenosylcob(III)alamin 5'-phosphate + GMP + H(+). It participates in cofactor biosynthesis; adenosylcobalamin biosynthesis; adenosylcobalamin from cob(II)yrinate a,c-diamide: step 7/7. Its function is as follows. Joins adenosylcobinamide-GDP and alpha-ribazole to generate adenosylcobalamin (Ado-cobalamin). Also synthesizes adenosylcobalamin 5'-phosphate from adenosylcobinamide-GDP and alpha-ribazole 5'-phosphate. In Corynebacterium glutamicum (strain ATCC 13032 / DSM 20300 / JCM 1318 / BCRC 11384 / CCUG 27702 / LMG 3730 / NBRC 12168 / NCIMB 10025 / NRRL B-2784 / 534), this protein is Adenosylcobinamide-GDP ribazoletransferase.